Reading from the N-terminus, the 129-residue chain is Large ribosomal subunit protein bL12 (129 aa).

It belongs to the bacterial ribosomal protein bL12 family. In terms of assembly, homodimer. Part of the ribosomal stalk of the 50S ribosomal subunit. Forms a multimeric L10(L12)X complex, where L10 forms an elongated spine to which 2 to 4 L12 dimers bind in a sequential fashion. Binds GTP-bound translation factors.

Forms part of the ribosomal stalk which helps the ribosome interact with GTP-bound translation factors. Is thus essential for accurate translation. This chain is Large ribosomal subunit protein bL12, found in Treponema pallidum (strain Nichols).